Consider the following 261-residue polypeptide: tRNA threonylcarbamoyladenosine dehydratase (261 aa).

A helical transmembrane segment spans residues 230–250 (CANGFGAATMITATFGFFAVS).

The protein belongs to the HesA/MoeB/ThiF family.

The protein resides in the membrane. In terms of biological role, catalyzes the ATP-dependent dehydration of threonylcarbamoyladenosine at position 37 (t(6)A37) to form cyclic t(6)A37 (ct(6)A37) in tRNAs that read codons beginning with adenine. This is tRNA threonylcarbamoyladenosine dehydratase (tcdA) from Haemophilus influenzae (strain ATCC 51907 / DSM 11121 / KW20 / Rd).